We begin with the raw amino-acid sequence, 367 residues long: Secondary metabolism regulator laeA (367 aa).

The tract at residues methionine 1–asparagine 82 is disordered. The span at leucine 19 to methionine 41 shows a compositional bias: polar residues. Composition is skewed to basic and acidic residues over residues threonine 47–proline 56 and lysine 71–asparagine 82.

It belongs to the methyltransferase superfamily. LaeA methyltransferase family. Component of the heterotrimeric velvet complex composed of laeA, veA and velB; VeA acting as a bridging protein between laeA and velB.

It is found in the nucleus. It catalyses the reaction L-methionyl-[protein] + S-adenosyl-L-methionine = S-methyl-L-methionyl-[protein] + S-adenosyl-L-homocysteine. Methyltransferase that performs automethylation. No other methyl-accepting substrate has been identified yet. Component of the velvet transcription factor complex that acts as a global regulator for secondary metabolite gene expression. Controls the expression of the monacolin K gene clusters. Also regulates pigmentation. The protein is Secondary metabolism regulator laeA of Monascus pilosus (Red mold).